The chain runs to 150 residues: FAD synthase (150 aa).

ATP-binding positions include T11–F12, H16–H19, D96, and Y124.

This sequence belongs to the archaeal FAD synthase family. Homodimer. A divalent metal cation is required as a cofactor.

It catalyses the reaction FMN + ATP + H(+) = FAD + diphosphate. It participates in cofactor biosynthesis; FAD biosynthesis; FAD from FMN: step 1/1. Catalyzes the transfer of the AMP portion of ATP to flavin mononucleotide (FMN) to produce flavin adenine dinucleotide (FAD) coenzyme. The protein is FAD synthase of Methanococcus maripaludis (strain C5 / ATCC BAA-1333).